A 303-amino-acid chain; its full sequence is Mycothiol acetyltransferase (303 aa).

N-acetyltransferase domains lie at 6 to 134 (TSLA…VEGD) and 154 to 303 (NEAY…QSSS). E37 contributes to the 1D-myo-inositol 2-(L-cysteinylamino)-2-deoxy-alpha-D-glucopyranoside binding site. Acetyl-CoA contacts are provided by residues 75–77 (VVV) and 83–88 (RQGYGS). 1D-myo-inositol 2-(L-cysteinylamino)-2-deoxy-alpha-D-glucopyranoside contacts are provided by E180, K221, and E233. Residues 237–239 (VGL) and 244–250 (RRRGLGD) contribute to the acetyl-CoA site. A 1D-myo-inositol 2-(L-cysteinylamino)-2-deoxy-alpha-D-glucopyranoside-binding site is contributed by Y271. 276 to 281 (NESARR) contributes to the acetyl-CoA binding site.

The protein belongs to the acetyltransferase family. MshD subfamily. In terms of assembly, monomer.

The catalysed reaction is 1D-myo-inositol 2-(L-cysteinylamino)-2-deoxy-alpha-D-glucopyranoside + acetyl-CoA = mycothiol + CoA + H(+). In terms of biological role, catalyzes the transfer of acetyl from acetyl-CoA to desacetylmycothiol (Cys-GlcN-Ins) to form mycothiol. The chain is Mycothiol acetyltransferase from Corynebacterium diphtheriae (strain ATCC 700971 / NCTC 13129 / Biotype gravis).